Reading from the N-terminus, the 943-residue chain is Translation initiation factor IF-2 (943 aa).

The interval 29-349 (LSVKSHSSSV…NNRGNSAPKL (321 aa)) is disordered. Composition is skewed to basic and acidic residues over residues 69-82 (PKEE…DKAS), 112-137 (FKAE…DNRN), 145-155 (QGKRHNNDRRN), 163-196 (DHNK…RDNA), and 224-253 (RQSE…EKQQ). Residues 254 to 266 (AEVAVQKAAAETK) show a composition bias toward low complexity. Basic and acidic residues predominate over residues 296–309 (KSRDNHRVNEDGPK). Positions 313-332 (NNKWNNQNQVRNQRNSNWNK) are enriched in low complexity. Residues 445–614 (ERAPVVTIMG…LLVAEVEELK (170 aa)) enclose the tr-type G domain. Residues 454-461 (GHVDHGKT) form a G1 region. GTP is bound at residue 454–461 (GHVDHGKT). The tract at residues 479–483 (GITQH) is G2. A G3 region spans residues 500–503 (DTPG). GTP is bound by residues 500 to 504 (DTPGH) and 554 to 557 (NKID). Positions 554-557 (NKID) are G4. Residues 590–592 (SAK) form a G5 region.

It belongs to the TRAFAC class translation factor GTPase superfamily. Classic translation factor GTPase family. IF-2 subfamily.

It localises to the cytoplasm. Functionally, one of the essential components for the initiation of protein synthesis. Protects formylmethionyl-tRNA from spontaneous hydrolysis and promotes its binding to the 30S ribosomal subunits. Also involved in the hydrolysis of GTP during the formation of the 70S ribosomal complex. The sequence is that of Translation initiation factor IF-2 from Streptococcus thermophilus (strain ATCC BAA-491 / LMD-9).